Here is a 72-residue protein sequence, read N- to C-terminus: UPF0270 protein YheU (72 aa).

Belongs to the UPF0270 family.

This Escherichia fergusonii (strain ATCC 35469 / DSM 13698 / CCUG 18766 / IAM 14443 / JCM 21226 / LMG 7866 / NBRC 102419 / NCTC 12128 / CDC 0568-73) protein is UPF0270 protein YheU.